The sequence spans 563 residues: Pyruvate decarboxylase (563 aa).

Aspartate 28 and histidine 115 together coordinate pyruvate. Residues threonine 390 and 413-415 contribute to the thiamine diphosphate site; that span reads GSI. Aspartate 444 contacts Mg(2+). Residues 445-446 and 471-476 contribute to the thiamine diphosphate site; these read GS and NDGYTI. 2 residues coordinate Mg(2+): asparagine 471 and glycine 473. Pyruvate is bound at residue glutamate 477.

The protein belongs to the TPP enzyme family. In terms of assembly, homotetramer. Requires Mg(2+) as cofactor. It depends on thiamine diphosphate as a cofactor.

The enzyme catalyses a 2-oxocarboxylate + H(+) = an aldehyde + CO2. The catalysed reaction is pyruvate + H(+) = acetaldehyde + CO2. The protein is Pyruvate decarboxylase (PDC1) of Kluyveromyces lactis (strain ATCC 8585 / CBS 2359 / DSM 70799 / NBRC 1267 / NRRL Y-1140 / WM37) (Yeast).